Reading from the N-terminus, the 554-residue chain is DNA ligase B (554 aa).

Lys-122 acts as the N6-AMP-lysine intermediate in catalysis.

The protein belongs to the NAD-dependent DNA ligase family. LigB subfamily.

It carries out the reaction NAD(+) + (deoxyribonucleotide)n-3'-hydroxyl + 5'-phospho-(deoxyribonucleotide)m = (deoxyribonucleotide)n+m + AMP + beta-nicotinamide D-nucleotide.. Catalyzes the formation of phosphodiester linkages between 5'-phosphoryl and 3'-hydroxyl groups in double-stranded DNA using NAD as a coenzyme and as the energy source for the reaction. In Pseudomonas fluorescens (strain SBW25), this protein is DNA ligase B.